A 269-amino-acid polypeptide reads, in one-letter code: Elongation factor Ts (269 aa).

Positions 76–79 are involved in Mg(2+) ion dislocation from EF-Tu; sequence TDFV.

Belongs to the EF-Ts family.

It localises to the cytoplasm. Functionally, associates with the EF-Tu.GDP complex and induces the exchange of GDP to GTP. It remains bound to the aminoacyl-tRNA.EF-Tu.GTP complex up to the GTP hydrolysis stage on the ribosome. The protein is Elongation factor Ts of Deinococcus geothermalis (strain DSM 11300 / CIP 105573 / AG-3a).